A 514-amino-acid chain; its full sequence is MKYRDLRDFLQQLELRGELKRIATPVSTHLEMTEIADRVLRAQGPALLFEHAVHNGARAAMPVLANLFGTPRRVAWGMGADEVSALRDTGELLASLREPEAPRGLRDALGKVAMLKSALWDMAPKRVRGPACQEIVWEGADVDLARLPIQTCWPGDVAPLLTWGLVITRGPNARRQNLGIYRQQPIAPNKLIMRWLSHRGGALDFREHARAHPGTPFPVAVALGADPATILGAVTPVPDSLSEYQFAGLLRGSRTEVGQALGSDLSVPAWAEIVLEGHLLPANDPRAVAPVVPEGAPPPPDTGYEMALEGPYGDHTGYYNEQDWFPVFTVDRITMRRDPVYHSTYTGKPPDEPAVLGVALNEVFVPLLRRQLPEIVDFYLPPEGCSYRLAVVSIRKQYAGHAKRVMFGLWSVLRQFMYTKFIVVVDDDIDPRNWNEVVWAITTRMDPVRDTVLVERTPIDYLDFASPVSGLGGKMGMDATNKWPGETDREWGRPIAMDDAVKQRVDAMWGELGL.

Position 177 (Asn177) interacts with Mn(2+). Residues 180–182 (IYR), 194–196 (RWL), and 199–200 (RG) contribute to the prenylated FMN site. Glu243 contributes to the Mn(2+) binding site. Asp314 functions as the Proton donor in the catalytic mechanism.

The protein belongs to the UbiD family. As to quaternary structure, homohexamer. The cofactor is prenylated FMN. Requires Mn(2+) as cofactor.

The protein resides in the cell membrane. The catalysed reaction is a 4-hydroxy-3-(all-trans-polyprenyl)benzoate + H(+) = a 2-(all-trans-polyprenyl)phenol + CO2. Its pathway is cofactor biosynthesis; ubiquinone biosynthesis. Its function is as follows. Catalyzes the decarboxylation of 3-octaprenyl-4-hydroxy benzoate to 2-octaprenylphenol, an intermediate step in ubiquinone biosynthesis. The polypeptide is 3-octaprenyl-4-hydroxybenzoate carboxy-lyase (Bordetella petrii (strain ATCC BAA-461 / DSM 12804 / CCUG 43448)).